We begin with the raw amino-acid sequence, 86 residues long: Small ribosomal subunit protein bS18 (86 aa).

It belongs to the bacterial ribosomal protein bS18 family. Part of the 30S ribosomal subunit. Forms a tight heterodimer with protein bS6.

In terms of biological role, binds as a heterodimer with protein bS6 to the central domain of the 16S rRNA, where it helps stabilize the platform of the 30S subunit. This chain is Small ribosomal subunit protein bS18, found in Campylobacter fetus subsp. fetus (strain 82-40).